Consider the following 317-residue polypeptide: Acetyl-coenzyme A carboxylase carboxyl transferase subunit alpha (317 aa).

The CoA carboxyltransferase C-terminal domain maps to 40 to 293; it reads LEGRVRDAMM…GTVIADALKE (254 aa).

It belongs to the AccA family. Acetyl-CoA carboxylase is a heterohexamer composed of biotin carboxyl carrier protein (AccB), biotin carboxylase (AccC) and two subunits each of ACCase subunit alpha (AccA) and ACCase subunit beta (AccD).

It is found in the cytoplasm. The enzyme catalyses N(6)-carboxybiotinyl-L-lysyl-[protein] + acetyl-CoA = N(6)-biotinyl-L-lysyl-[protein] + malonyl-CoA. Its pathway is lipid metabolism; malonyl-CoA biosynthesis; malonyl-CoA from acetyl-CoA: step 1/1. In terms of biological role, component of the acetyl coenzyme A carboxylase (ACC) complex. First, biotin carboxylase catalyzes the carboxylation of biotin on its carrier protein (BCCP) and then the CO(2) group is transferred by the carboxyltransferase to acetyl-CoA to form malonyl-CoA. The polypeptide is Acetyl-coenzyme A carboxylase carboxyl transferase subunit alpha (Sinorhizobium fredii (strain NBRC 101917 / NGR234)).